Consider the following 202-residue polypeptide: Na(+)-translocating NADH-quinone reductase subunit E (202 aa).

The next 6 helical transmembrane spans lie at 11–31 (AVFI…FIAI), 35–55 (VETA…TVPA), 79–99 (LSFL…QILE), 114–134 (GVFL…LFMV), 144–164 (VVYG…LAGI), and 180–200 (LGIT…FSGV).

The protein belongs to the NqrDE/RnfAE family. In terms of assembly, composed of six subunits; NqrA, NqrB, NqrC, NqrD, NqrE and NqrF.

The protein localises to the cell inner membrane. The enzyme catalyses a ubiquinone + n Na(+)(in) + NADH + H(+) = a ubiquinol + n Na(+)(out) + NAD(+). In terms of biological role, NQR complex catalyzes the reduction of ubiquinone-1 to ubiquinol by two successive reactions, coupled with the transport of Na(+) ions from the cytoplasm to the periplasm. NqrA to NqrE are probably involved in the second step, the conversion of ubisemiquinone to ubiquinol. The polypeptide is Na(+)-translocating NADH-quinone reductase subunit E (Stutzerimonas stutzeri (strain A1501) (Pseudomonas stutzeri)).